The primary structure comprises 367 residues: Probable thylakoidal processing peptidase 2, chloroplastic (367 aa).

Residues M1–R68 constitute a chloroplast transit peptide. Positions D53–A72 are disordered. The segment covering G62–A72 has biased composition (low complexity). The helical transmembrane segment at E185–A205 threads the bilayer. The Lumenal, thylakoid segment spans residues E206–S367. Residue S214 is part of the active site.

This sequence belongs to the peptidase S26 family.

It is found in the plastid. The protein resides in the chloroplast thylakoid membrane. The catalysed reaction is Cleavage of hydrophobic, N-terminal signal or leader sequences from secreted and periplasmic proteins.. Functionally, cleaves the thylakoid-transfer domain from a chloroplast protein. The sequence is that of Probable thylakoidal processing peptidase 2, chloroplastic (TPP2) from Arabidopsis thaliana (Mouse-ear cress).